A 401-amino-acid polypeptide reads, in one-letter code: Probable 2,3-bisphosphoglycerate-independent phosphoglycerate mutase (401 aa).

The protein belongs to the BPG-independent phosphoglycerate mutase family. A-PGAM subfamily.

It catalyses the reaction (2R)-2-phosphoglycerate = (2R)-3-phosphoglycerate. Its pathway is carbohydrate degradation; glycolysis; pyruvate from D-glyceraldehyde 3-phosphate: step 3/5. Functionally, catalyzes the interconversion of 2-phosphoglycerate and 3-phosphoglycerate. The polypeptide is Probable 2,3-bisphosphoglycerate-independent phosphoglycerate mutase (Thermotoga maritima (strain ATCC 43589 / DSM 3109 / JCM 10099 / NBRC 100826 / MSB8)).